Consider the following 181-residue polypeptide: Histone H1 (181 aa).

2 disordered regions span residues 1 to 23 (MTET…THPP) and 81 to 181 (TKGA…PKKK). Basic residues predominate over residues 8–19 (KPKKVSKPKAKP). The H15 domain occupies 20–94 (THPPTSVMVM…GASGSFKLAA (75 aa)). Basic residues-rich tracts occupy residues 103-119 (AVAK…KAAA) and 145-181 (KPKK…PKKK).

The protein belongs to the histone H1/H5 family.

It localises to the nucleus. The protein localises to the chromosome. In terms of biological role, histones H1 are necessary for the condensation of nucleosome chains into higher-order structures. This chain is Histone H1, found in Tigriopus californicus (Marine copepod).